The primary structure comprises 78 residues: Protein Class8-like (78 aa).

Positions 1 to 19 are cleaved as a signal peptide; that stretch reads MRTLVVLLIGAVLLCSANA. Residues 20 to 36 constitute a propeptide that is removed on maturation; it reads FLDELLAESVNDMTDKR. The ShKT domain maps to 38 to 78; the sequence is CFDKYKSNICGGVISPAHCVRRSGRMAKFAKENCAHFCGFC. 3 cysteine pairs are disulfide-bonded: Cys38–Cys78, Cys47–Cys71, and Cys56–Cys75.

In terms of tissue distribution, expressed in ganglion neurons residing in the mesoglea (observed in both planulae and primary polyps). Not expressed in nematocytes.

Its function is as follows. Probable neuropeptide. The protein is Protein Class8-like of Nematostella vectensis (Starlet sea anemone).